The following is an 861-amino-acid chain: Extra-large guanine nucleotide-binding protein 2 (861 aa).

Disordered regions lie at residues 1–32 (MAAV…TSSG) and 121–168 (VSGS…DDRV). Residues 131–143 (KRLDVPEEVKSPA) are compositionally biased toward basic and acidic residues. Residues 146 to 156 (RLSPSSPLSAS) show a composition bias toward low complexity. Residues 157–168 (AREEDHLDDDRV) show a composition bias toward basic and acidic residues. The Nuclear localization signal signature appears at 204 to 211 (RAERKGKR). The segment at 214–257 (CYRCQLGNRFTEKEVCIVCDAKYCFNCVRRAMGAMPEGRKCQAC) adopts an RING-type; degenerate zinc-finger fold. The G-alpha domain maps to 461-853 (MLNKLLLIGS…TSMFQEMSTT (393 aa)). The tract at residues 464-477 (KLLLIGSEKGGATT) is G1 motif. 469 to 477 (GSEKGGATT) serves as a coordination point for GTP. Thr-476 provides a ligand contact to Ca(2+). The segment at 523-545 (EMSNDQSSGNVGDETSAKPGNSI) is disordered. 624–632 (DILQAEGLS) lines the GTP pocket. The tract at residues 624-632 (DILQAEGLS) is G2 motif. Ca(2+) is bound at residue Ser-632. Residues 665–674 (YQLIRLNPRS) are G3 motif. The tract at residues 737–744 (LLVLTKFD) is G4 motif. 741–744 (TKFD) serves as a coordination point for GTP. The segment at 818 to 823 (QVSLES) is G5 motif.

It belongs to the G-alpha family. XLG subfamily. As to quaternary structure, interacts with GB1. Component of a G-protein complex at least composed of XLG2 and GB1. Interacts with RTV1. Requires Ca(2+) as cofactor. Ubiquitous. Strongly expressed in vascular tissues, root and shoot meristems and lateral root primordia.

The protein resides in the nucleus. Functionally, guanine nucleotide-binding proteins (G proteins) are involved as modulators or transducers in various transmembrane signaling systems. Binds GTP with specificity. Plays a role in the root morphogenesis by regulation of the cell proliferation. Acts as a positive regulator in resistance to pathogen that triggers the salicylic acid (SA) pathway. Promotes the DNA binding activity of RTV1 specifically to promoter regions of FT and SOC1 in vivo leading to the activation of floral integrator genes. In Arabidopsis thaliana (Mouse-ear cress), this protein is Extra-large guanine nucleotide-binding protein 2 (XLG2).